A 305-amino-acid polypeptide reads, in one-letter code: NAD kinase (305 aa).

D76 acts as the Proton acceptor in catalysis. NAD(+) contacts are provided by residues 76–77 (DG), 150–151 (ND), R161, and D180.

It belongs to the NAD kinase family. Requires a divalent metal cation as cofactor.

The protein localises to the cytoplasm. It catalyses the reaction NAD(+) + ATP = ADP + NADP(+) + H(+). Involved in the regulation of the intracellular balance of NAD and NADP, and is a key enzyme in the biosynthesis of NADP. Catalyzes specifically the phosphorylation on 2'-hydroxyl of the adenosine moiety of NAD to yield NADP. The polypeptide is NAD kinase (Treponema pallidum (strain Nichols)).